A 564-amino-acid polypeptide reads, in one-letter code: Threonine--tRNA ligase (564 aa).

The segment at 167–464 (DHRAIGKRLE…LLEKTHGNLP (298 aa)) is catalytic. Positions 260, 311, and 441 each coordinate Zn(2+).

This sequence belongs to the class-II aminoacyl-tRNA synthetase family. Homodimer. It depends on Zn(2+) as a cofactor.

The protein resides in the cytoplasm. It carries out the reaction tRNA(Thr) + L-threonine + ATP = L-threonyl-tRNA(Thr) + AMP + diphosphate + H(+). Catalyzes the attachment of threonine to tRNA(Thr) in a two-step reaction: L-threonine is first activated by ATP to form Thr-AMP and then transferred to the acceptor end of tRNA(Thr). Also edits incorrectly charged L-seryl-tRNA(Thr). This is Threonine--tRNA ligase from Mycoplasma pneumoniae (strain ATCC 29342 / M129 / Subtype 1) (Mycoplasmoides pneumoniae).